The primary structure comprises 268 residues: MKRKPAVAGYFYPERKDELYSLLSSFAIPEQHVSGTIIGAVVPHAGIIYSGRTAMYSYRAIEKSAVRDFVIIGPNHRPLTPYASLYPEGEWSTPLGDALINDRMAEALYRDSNYIVKDEESHLMEHSVEVQIPFLQYLFGDGFRFVPVILGDQEIDVARDIGEAIMKIEDPFIFIASSDFTHYEDAKRVEKKDMDLISAILTLDLDKFYSVLEKENVTACGYGAIAALMYYTKKRGGRMIFLNHSNSGDVTGDYSEVVGYASLVSVIP.

The protein belongs to the MEMO1 family.

The sequence is that of MEMO1 family protein Ta0237 from Thermoplasma acidophilum (strain ATCC 25905 / DSM 1728 / JCM 9062 / NBRC 15155 / AMRC-C165).